We begin with the raw amino-acid sequence, 492 residues long: Sestrin-3 (492 aa).

An N-terminal domain; may mediate the alkylhydroperoxide reductase activity region spans residues 62 to 243; that stretch reads LVEEYSTSGR…VCDLANDNSI (182 aa). The Cysteine sulfenic acid (-SOH) intermediate role is filled by Cys-121. The C-terminal domain; mediates TORC1 regulation stretch occupies residues 310–492; sequence PHSDFEDDVI…ALRAITRHLT (183 aa). L-leucine-binding positions include 386-389, Thr-398, and Glu-463; that span reads TYNT.

The protein belongs to the sestrin family. As to quaternary structure, interacts with the GATOR2 complex which is composed of MIOS, SEC13, SEH1L, WDR24 and WDR59; the interaction is not regulated by leucine. Interacts with RRAGA, RRAGB, RRAGC and RRAGD; may function as a guanine nucleotide dissociation inhibitor for RRAGs and regulate them. Interacts with the TORC2 complex; through RICTOR. In terms of tissue distribution, detected in liver and skeletal muscles.

It is found in the cytoplasm. The catalysed reaction is a hydroperoxide + L-cysteinyl-[protein] = S-hydroxy-L-cysteinyl-[protein] + an alcohol. May function as an intracellular leucine sensor that negatively regulates the TORC1 signaling pathway. May also regulate the insulin-receptor signaling pathway through activation of TORC2. This metabolic regulator may also play a role in protection against oxidative and genotoxic stresses. May prevent the accumulation of reactive oxygen species (ROS) through the alkylhydroperoxide reductase activity born by the N-terminal domain of the protein. The protein is Sestrin-3 of Mus musculus (Mouse).